We begin with the raw amino-acid sequence, 104 residues long: MSNFEIRVNESYESFKNIDCFENACVVIDNMLRVLENPKNMNIYWKKIVPMIPKAYYDRDPKSDTKEELLYLVCSNSFYLDELFEKAEDEQAINALSKCEQECC.

It belongs to the CowN family.

Functionally, is required to sustain N(2)-dependent growth in the presence of low levels of carbon monoxide (CO). Probably acts by protecting the N(2) fixation ability of the nitrogenase complex, which is inactivated in the presence of CO. In Arcobacter nitrofigilis (strain ATCC 33309 / DSM 7299 / CCUG 15893 / LMG 7604 / NCTC 12251 / CI) (Campylobacter nitrofigilis), this protein is N(2)-fixation sustaining protein CowN.